The following is a 1116-amino-acid chain: Phosphatidylinositol 4-kinase beta 2 (1116 aa).

The region spanning 1–143 (MQMAQFLSLV…SRIQEKCQIA (143 aa)) is the PIK helical domain. Repeat copies occupy residues 210-229 (ADDN…RDAL), 242-261 (CEKD…EDDE), 264-283 (SNSE…EEEE), 286-304 (NNSE…DEEE), 307-326 (SSSD…DEEE), 329-348 (ANSE…EDEE), 351-370 (ANTE…EDDK), and 378-396 (EEKD…DEKR). The interval 210-507 (ADDNKIFKRL…FRDRDRSVED (298 aa)) is 11 X 20 AA approximate repeats (PPC). Over residues 394-404 (EKRNGNERNET) the composition is skewed to basic and acidic residues. The tract at residues 394-417 (EKRNGNERNETDETVYTDETSGED) is disordered. Residues 405–415 (DETVYTDETSG) show a composition bias toward acidic residues. Repeat 9 spans residues 418–436 (NGREGFFKKLFKEKFEDKP). Phosphoserine occurs at positions 447 and 452. 2 repeat units span residues 452 to 470 (SSEF…EDVK) and 488 to 507 (PGTE…SVED). Disordered stretches follow at residues 515 to 540 (KYKE…LPNN) and 794 to 813 (GEAP…SDAQ). A PI3K/PI4K catalytic domain is found at 830–1101 (EFWEGKRLRI…LISSSLDAWR (272 aa)). Residues 836-842 (RLRIRKD) are G-loop. The tract at residues 964–972 (QIKDRHNGN) is catalytic loop. The tract at residues 983-1007 (HIDFGFMLSNSPGGVNFESAPFKLT) is activation loop.

It belongs to the PI3/PI4-kinase family. Type III PI4K subfamily.

The protein resides in the cell membrane. Its subcellular location is the golgi apparatus. It localises to the trans-Golgi network. It is found in the cytoplasmic vesicle membrane. The catalysed reaction is a 1,2-diacyl-sn-glycero-3-phospho-(1D-myo-inositol) + ATP = a 1,2-diacyl-sn-glycero-3-phospho-(1D-myo-inositol 4-phosphate) + ADP + H(+). Functionally, acts on phosphatidylinositol (PtdIns) in the first committed step in the production of the second messenger inositol-1,4,5-trisphosphate. Necessary for proper organization of the trans-Golgi network (TGN) and post-Golgi secretion in root hairs. Together with PI4KB1, required during polarized root hair expansion and pollen tube elongation. Functions redundantly with PI4KB1 upstream of the cold response phosphoinositide-dependent phospholipase C (PI-PLC) pathway. The sequence is that of Phosphatidylinositol 4-kinase beta 2 (PI4KB2) from Arabidopsis thaliana (Mouse-ear cress).